The sequence spans 352 residues: Holliday junction branch migration complex subunit RuvB (352 aa).

The large ATPase domain (RuvB-L) stretch occupies residues 1–181; the sequence is MTDRIVGAAK…FGIPVRLHFY (181 aa). ATP contacts are provided by residues L20, R21, G62, K65, T66, T67, 128-130, R171, Y181, and R218; that span reads EDF. Position 66 (T66) interacts with Mg(2+). The small ATPAse domain (RuvB-S) stretch occupies residues 182-252; the sequence is EVAELEGIVR…AADKALQRLE (71 aa). Residues 255 to 352 are head domain (RuvB-H); the sequence is ELGLDALDHR…FDGDEENGSA (98 aa). Residues R291, R310, and R315 each contribute to the DNA site.

Belongs to the RuvB family. In terms of assembly, homohexamer. Forms an RuvA(8)-RuvB(12)-Holliday junction (HJ) complex. HJ DNA is sandwiched between 2 RuvA tetramers; dsDNA enters through RuvA and exits via RuvB. An RuvB hexamer assembles on each DNA strand where it exits the tetramer. Each RuvB hexamer is contacted by two RuvA subunits (via domain III) on 2 adjacent RuvB subunits; this complex drives branch migration. In the full resolvosome a probable DNA-RuvA(4)-RuvB(12)-RuvC(2) complex forms which resolves the HJ.

The protein localises to the cytoplasm. It carries out the reaction ATP + H2O = ADP + phosphate + H(+). The RuvA-RuvB-RuvC complex processes Holliday junction (HJ) DNA during genetic recombination and DNA repair, while the RuvA-RuvB complex plays an important role in the rescue of blocked DNA replication forks via replication fork reversal (RFR). RuvA specifically binds to HJ cruciform DNA, conferring on it an open structure. The RuvB hexamer acts as an ATP-dependent pump, pulling dsDNA into and through the RuvAB complex. RuvB forms 2 homohexamers on either side of HJ DNA bound by 1 or 2 RuvA tetramers; 4 subunits per hexamer contact DNA at a time. Coordinated motions by a converter formed by DNA-disengaged RuvB subunits stimulates ATP hydrolysis and nucleotide exchange. Immobilization of the converter enables RuvB to convert the ATP-contained energy into a lever motion, pulling 2 nucleotides of DNA out of the RuvA tetramer per ATP hydrolyzed, thus driving DNA branch migration. The RuvB motors rotate together with the DNA substrate, which together with the progressing nucleotide cycle form the mechanistic basis for DNA recombination by continuous HJ branch migration. Branch migration allows RuvC to scan DNA until it finds its consensus sequence, where it cleaves and resolves cruciform DNA. This Parvibaculum lavamentivorans (strain DS-1 / DSM 13023 / NCIMB 13966) protein is Holliday junction branch migration complex subunit RuvB.